Reading from the N-terminus, the 925-residue chain is GPI ethanolamine phosphate transferase 1 (925 aa).

At 1 to 6 (MWNKHR) the chain is on the cytoplasmic side. A helical transmembrane segment spans residues 7 to 27 (LAFILVGLLFHLFYLRSIFDI). Over 28–457 (YFVSPLVHGM…TTYNWRFIRS (430 aa)) the chain is Lumenal. N-linked (GlcNAc...) asparagine glycans are attached at residues asparagine 90, asparagine 138, asparagine 198, asparagine 286, asparagine 312, and asparagine 358. Residues 458 to 478 (IVTLGFIGWITYSFTIFLRLF) traverse the membrane as a helical segment. Topologically, residues 479 to 492 (ILEKQYAMKTSPQN) are cytoplasmic. Residues 493–510 (LASFGALTAALNYVLYYQ) form a helical membrane-spanning segment. Residues 511-516 (RSPFNY) lie on the Lumenal side of the membrane. The chain crosses the membrane as a helical span at residues 517 to 537 (YMYLLFPLFFWSQILTNSTIL). Residues 538 to 547 (HDGIREMFKG) lie on the Cytoplasmic side of the membrane. A helical transmembrane segment spans residues 548-568 (VSMLQRIGICALIVSIYEGIV). At 569 to 574 (YGYFDR) the chain is on the lumenal side. A helical transmembrane segment spans residues 575–595 (WIFTIIFNLLALYPFFCGIKD). At 596–599 (AKTN) the chain is on the cytoplasmic side. A helical transmembrane segment spans residues 600–620 (MFWGANSMALSIFTLFDAVKI). Glutamate 621 is a topological domain (lumenal). Residues 622-642 (SLTQINVSGLLLVASGLYALW) traverse the membrane as a helical segment. Over 643–653 (RVSKKINSHTK) the chain is Cytoplasmic. Residues 654–674 (IVILLQILLLAMMLAVTNKSV) form a helical membrane-spanning segment. Residues 675 to 687 (TSLQQRAGLPTDA) are Lumenal-facing. Residues 688-708 (KIAGWVILTLSLSLMPLLHYL) form a helical membrane-spanning segment. Residues 709 to 719 (KPSNDYQVRVL) are Cytoplasmic-facing. A helical transmembrane segment spans residues 720–740 (VIYLTFAPTFLILTISFESFF). The Lumenal portion of the chain corresponds to 741 to 775 (YLLFTNYLMLWIEIESKIKAQNIAKNSQNWLQLLR). Residues 776–796 (ISIIGFFLLQFAFFGTGNVAS) traverse the membrane as a helical segment. Residues 797-818 (ISSFSLDSVYRLMPVFDPFPMG) are Cytoplasmic-facing. The helical transmembrane segment at 819–839 (ALLILKIMIPYILLSTALGIM) threads the bilayer. The Lumenal portion of the chain corresponds to 840-848 (NLKLNIKDY). A helical transmembrane segment spans residues 849–869 (TVSSLILSTSDVLSLNFFYLL). Over 870-885 (RTEGSWLDIGVTISNY) the chain is Cytoplasmic. A helical transmembrane segment spans residues 886 to 906 (CLAILSSLFMIVLELFSHFLL). Topologically, residues 907-925 (KNVRDNGMDIAASKQQKRH) are lumenal.

Belongs to the PIGG/PIGN/PIGO family. PIGN subfamily.

The protein localises to the endoplasmic reticulum membrane. The protein operates within glycolipid biosynthesis; glycosylphosphatidylinositol-anchor biosynthesis. Functionally, ethanolamine phosphate transferase involved in glycosylphosphatidylinositol-anchor biosynthesis. Transfers ethanolamine phosphate to the first alpha-1,4-linked mannose of the glycosylphosphatidylinositol precursor of GPI-anchor. The chain is GPI ethanolamine phosphate transferase 1 (MCD4) from Eremothecium gossypii (strain ATCC 10895 / CBS 109.51 / FGSC 9923 / NRRL Y-1056) (Yeast).